Reading from the N-terminus, the 141-residue chain is Hemoglobin subunit alpha (141 aa).

Residues 1–141 (VLSPADKSNV…VSTVLTSKYR (141 aa)) form the Globin domain. A Phosphoserine modification is found at serine 3. Residues lysine 7 and lysine 11 each carry the N6-succinyllysine modification. Position 16 is an N6-acetyllysine; alternate (lysine 16). Lysine 16 is modified (N6-succinyllysine; alternate). Tyrosine 24 carries the phosphotyrosine modification. Serine 35 bears the Phosphoserine mark. At lysine 40 the chain carries N6-succinyllysine. Serine 49 carries the post-translational modification Phosphoserine. O2 is bound at residue histidine 58. A heme b-binding site is contributed by histidine 87. Serine 102 is modified (phosphoserine). Position 108 is a phosphothreonine (threonine 108). 2 positions are modified to phosphoserine: serine 124 and serine 131. Residues threonine 134 and threonine 137 each carry the phosphothreonine modification. Serine 138 carries the phosphoserine modification.

It belongs to the globin family. As to quaternary structure, heterotetramer of two alpha chains and two beta chains. As to expression, red blood cells.

Its function is as follows. Involved in oxygen transport from the lung to the various peripheral tissues. Hemopressin acts as an antagonist peptide of the cannabinoid receptor CNR1. Hemopressin-binding efficiently blocks cannabinoid receptor CNR1 and subsequent signaling. The sequence is that of Hemoglobin subunit alpha (HBA) from Saguinus mystax (Moustached tamarin).